A 302-amino-acid polypeptide reads, in one-letter code: Nitric oxide synthase-interacting protein (302 aa).

Residue Ser36 is modified to Phosphoserine. The tract at residues 55–75 is U-box-like; that stretch reads DPVVTPDGYLYEREAILEYIL. Residues 78–101 carry the Nuclear localization signal motif; it reads KKEIARQMKAYEKQRGARREEQKE. The interval 126–156 is disordered; it reads LNPFTPKAASAGNGPDDAQPGSSAGPAGKDK.

The protein belongs to the NOSIP family. Interacts with NOS1 and NOS3. Interacts with PP2A holoenzyme, containing PPP2CA, PPP2CB, PPP2R1A and PPP2R2A subunits.

The protein localises to the cytoplasm. Its subcellular location is the nucleus. It catalyses the reaction S-ubiquitinyl-[E2 ubiquitin-conjugating enzyme]-L-cysteine + [acceptor protein]-L-lysine = [E2 ubiquitin-conjugating enzyme]-L-cysteine + N(6)-ubiquitinyl-[acceptor protein]-L-lysine.. Its function is as follows. E3 ubiquitin-protein ligase that is essential for proper development of the forebrain, the eye, and the face. Catalyzes monoubiquitination of serine/threonine-protein phosphatase 2A (PP2A) catalytic subunit PPP2CA/PPP2CB. Negatively regulates nitric oxide production by inducing NOS1 and NOS3 translocation to actin cytoskeleton and inhibiting their enzymatic activity. This Bos taurus (Bovine) protein is Nitric oxide synthase-interacting protein (NOSIP).